Here is an 82-residue protein sequence, read N- to C-terminus: Large ribosomal subunit protein bL31B (82 aa).

It belongs to the bacterial ribosomal protein bL31 family. Type B subfamily. In terms of assembly, part of the 50S ribosomal subunit.

This Acinetobacter baylyi (strain ATCC 33305 / BD413 / ADP1) protein is Large ribosomal subunit protein bL31B.